The sequence spans 313 residues: Formate-nitrite transporter (313 aa).

Topologically, residues 1–46 (MTKGSKYTIDPISVKTACTSEESYIRCVEYGKGKAHYPNLSLLAKA) are cytoplasmic. The chain crosses the membrane as a helical span at residues 47-67 (ILAGVFVGVCAHASGIAGGHF). Over 68 to 77 (YYHKLREHVG) the chain is Extracellular. A helical transmembrane segment spans residues 78–98 (ISMSAFVYGFTFPIAFLCIIA). The Cytoplasmic segment spans residues 99–127 (TGSDLFTGNTLAVTTALLQRKVTLLEYLR). The chain crosses the membrane as a helical span at residues 128–148 (VMSISLFGNYVGAVSFAFFVS). The Extracellular segment spans residues 149 to 184 (HLSGAFKKHEEIGKNHIFQFLNDIAEKKVSHTFVQC). Residues 185-205 (VCLAIGCNIFVCLAVYFVLTI) form a helical membrane-spanning segment. Topologically, residues 206–210 (KDGSG) are cytoplasmic. The helical transmembrane segment at 211–231 (MVFSVFFAVYAFAIAGYEHII) threads the bilayer. Residues 232–256 (ANMYTLNLALMIEANVDWTKVYVDN) lie on the Extracellular side of the membrane. A helical transmembrane segment spans residues 257–277 (LLPTLIGNYIAGAIVLACPLF). The Cytoplasmic portion of the chain corresponds to 278–313 (YIYRHSYSDYEKTRGDGGNSGLKSLSIEMQNGSSGR). The segment at 290-313 (TRGDGGNSGLKSLSIEMQNGSSGR) is disordered. The span at 298-313 (GLKSLSIEMQNGSSGR) shows a compositional bias: polar residues.

It belongs to the FNT transporter (TC 1.A.16) family. Homopentamer.

The protein localises to the cell membrane. Its subcellular location is the vacuole membrane. It catalyses the reaction (S)-lactate(in) + H(+)(in) = (S)-lactate(out) + H(+)(out). The catalysed reaction is formate(in) + H(+)(in) = formate(out) + H(+)(out). The enzyme catalyses pyruvate(out) + H(+)(out) = pyruvate(in) + H(+)(in). It carries out the reaction acetate(out) + H(+)(out) = acetate(in) + H(+)(in). Inhibited by the Malaria Box compound MMV007839 and its derivatives BH296 and BH267.meta. Its function is as follows. Monocarboxylate-proton symporter that mediates the efflux of the waste product lactate in the intraerythrocytic parasites; active in acidic-to-neutral pH range. Transports L-lactate. This Plasmodium vivax protein is Formate-nitrite transporter.